A 136-amino-acid chain; its full sequence is UPF0213 protein AHA_3736 (136 aa).

The GIY-YIG domain occupies 17-92; sequence SHWFIYMVRT…KQQSKAFKEQ (76 aa). Positions 114-136 are disordered; that stretch reads QKRPRYAAAKEGSDNRECQRQVD. Basic and acidic residues predominate over residues 124–136; sequence EGSDNRECQRQVD.

Belongs to the UPF0213 family.

This is UPF0213 protein AHA_3736 from Aeromonas hydrophila subsp. hydrophila (strain ATCC 7966 / DSM 30187 / BCRC 13018 / CCUG 14551 / JCM 1027 / KCTC 2358 / NCIMB 9240 / NCTC 8049).